Consider the following 327-residue polypeptide: GTPase Obg (327 aa).

An Obg domain is found at 2-160 (HTFKDSLNIT…LDLRLELVLI (159 aa)). The OBG-type G domain maps to 161–326 (ADIGLVGLPN…LVNELFALSR (166 aa)). GTP-binding positions include 167 to 174 (GLPNAGKS), 192 to 196 (FTTKV), 213 to 216 (DVPG), 280 to 283 (NKLD), and 307 to 309 (SIY). Positions 174 and 194 each coordinate Mg(2+).

This sequence belongs to the TRAFAC class OBG-HflX-like GTPase superfamily. OBG GTPase family. Monomer. The cofactor is Mg(2+).

It is found in the cytoplasm. Its function is as follows. An essential GTPase which binds GTP, GDP and possibly (p)ppGpp with moderate affinity, with high nucleotide exchange rates and a fairly low GTP hydrolysis rate. Plays a role in control of the cell cycle, stress response, ribosome biogenesis and in those bacteria that undergo differentiation, in morphogenesis control. In Borrelia turicatae (strain 91E135), this protein is GTPase Obg.